A 78-amino-acid polypeptide reads, in one-letter code: UPF0349 protein BH3414 (78 aa).

It belongs to the UPF0349 family.

In Halalkalibacterium halodurans (strain ATCC BAA-125 / DSM 18197 / FERM 7344 / JCM 9153 / C-125) (Bacillus halodurans), this protein is UPF0349 protein BH3414.